The chain runs to 518 residues: 2-isopropylmalate synthase (518 aa).

One can recognise a Pyruvate carboxyltransferase domain in the interval 4 to 266 (INFFDTTLRD…ESTIQLNEIK (263 aa)). Residues D13, H201, H203, and N237 each coordinate Mn(2+). The regulatory domain stretch occupies residues 391 to 518 (DFISLQVHYG…GLSKQAAVGS (128 aa)).

This sequence belongs to the alpha-IPM synthase/homocitrate synthase family. LeuA type 1 subfamily. In terms of assembly, homodimer. The cofactor is Mn(2+).

The protein resides in the cytoplasm. It carries out the reaction 3-methyl-2-oxobutanoate + acetyl-CoA + H2O = (2S)-2-isopropylmalate + CoA + H(+). The protein operates within amino-acid biosynthesis; L-leucine biosynthesis; L-leucine from 3-methyl-2-oxobutanoate: step 1/4. Catalyzes the condensation of the acetyl group of acetyl-CoA with 3-methyl-2-oxobutanoate (2-ketoisovalerate) to form 3-carboxy-3-hydroxy-4-methylpentanoate (2-isopropylmalate). The sequence is that of 2-isopropylmalate synthase from Bacillus licheniformis (strain ATCC 14580 / DSM 13 / JCM 2505 / CCUG 7422 / NBRC 12200 / NCIMB 9375 / NCTC 10341 / NRRL NRS-1264 / Gibson 46).